A 211-amino-acid chain; its full sequence is Transcriptional regulatory protein LiaR (211 aa).

The Response regulatory domain maps to 3–119; it reads RVLLIDDHEM…EIADAIRAAS (117 aa). The residue at position 54 (D54) is a 4-aspartylphosphate. The HTH luxR-type domain occupies 143-208; the sequence is NALPHESLTK…QAAVYAHRNH (66 aa). The H-T-H motif DNA-binding region spans 167 to 186; the sequence is NKEIGEELFITIKTVKTHIT.

Phosphorylated by LiaS.

It is found in the cytoplasm. Its function is as follows. Member of the two-component regulatory system LiaS/LiaR probably involved in response to a subset of cell wall-active antibiotics that interfere with the lipid II cycle in the cytoplasmic membrane (bacitracin, nisin, ramoplanin and vancomycin). Also seems to be involved in response to cationic antimicrobial peptides and secretion stress. LiaR regulates the transcription of the liaIHGFSR operon. The chain is Transcriptional regulatory protein LiaR (liaR) from Bacillus subtilis (strain 168).